The chain runs to 926 residues: Protein Niban 1 (926 aa).

Gly2 carries N-myristoyl glycine lipidation. 5 positions are modified to phosphoserine: Ser578, Ser581, Ser595, Ser601, and Ser640. 2 disordered regions span residues Leu604 to Ser699 and Val719 to Asn889. A compositionally biased stretch (polar residues) spans Val661–Leu672. Residue Ser699 is modified to Phosphoserine. Positions Asn733–Ala745 are enriched in basic and acidic residues. Ser755 bears the Phosphoserine mark. The segment covering Cys756–Gln767 has biased composition (basic and acidic residues). The span at Gly784–Thr797 shows a compositional bias: low complexity. Residues Val840–Pro854 are compositionally biased toward polar residues. Ser923 bears the Phosphoserine mark.

The protein belongs to the Niban family.

It is found in the cytoplasm. It localises to the membrane. Functionally, regulates phosphorylation of a number of proteins involved in translation regulation including EIF2A, EIF4EBP1 and RPS6KB1. May be involved in the endoplasmic reticulum stress response. This chain is Protein Niban 1, found in Mus musculus (Mouse).